A 318-amino-acid chain; its full sequence is NADH-ubiquinone oxidoreductase chain 1 (318 aa).

The next 8 helical transmembrane spans lie at 2-22, 68-88, 100-120, 146-166, 171-191, 213-233, 253-273, and 285-305; these read PMTN…FLML, ITLY…LWTP, LGLL…LWSG, LAII…STLV, HLWL…STLA, IEYA…NIIM, ELYT…FLWI, and LMHL…MWYI.

Belongs to the complex I subunit 1 family. Core subunit of respiratory chain NADH dehydrogenase (Complex I) which is composed of 45 different subunits.

The protein resides in the mitochondrion inner membrane. The catalysed reaction is a ubiquinone + NADH + 5 H(+)(in) = a ubiquinol + NAD(+) + 4 H(+)(out). Functionally, core subunit of the mitochondrial membrane respiratory chain NADH dehydrogenase (Complex I) which catalyzes electron transfer from NADH through the respiratory chain, using ubiquinone as an electron acceptor. Essential for the catalytic activity and assembly of complex I. The protein is NADH-ubiquinone oxidoreductase chain 1 (MT-ND1) of Pan troglodytes (Chimpanzee).